A 146-amino-acid chain; its full sequence is Holo-[acyl-carrier-protein] synthase (146 aa).

2 residues coordinate Mg(2+): aspartate 9 and glutamate 63.

It belongs to the P-Pant transferase superfamily. AcpS family. Mg(2+) serves as cofactor.

It is found in the cytoplasm. The catalysed reaction is apo-[ACP] + CoA = holo-[ACP] + adenosine 3',5'-bisphosphate + H(+). In terms of biological role, transfers the 4'-phosphopantetheine moiety from coenzyme A to a Ser of acyl-carrier-protein. This Burkholderia ambifaria (strain ATCC BAA-244 / DSM 16087 / CCUG 44356 / LMG 19182 / AMMD) (Burkholderia cepacia (strain AMMD)) protein is Holo-[acyl-carrier-protein] synthase.